The sequence spans 239 residues: tRNA (guanine-N(7)-)-methyltransferase (239 aa).

Residues Glu69, Glu94, Asp121, and Asp144 each contribute to the S-adenosyl-L-methionine site. Residue Asp144 is part of the active site. Lys148 serves as a coordination point for substrate. The segment at 150–155 (RHNKRR) is interaction with RNA. Substrate-binding positions include Asp180 and 217–220 (TKFE).

It belongs to the class I-like SAM-binding methyltransferase superfamily. TrmB family. In terms of assembly, monomer.

The enzyme catalyses guanosine(46) in tRNA + S-adenosyl-L-methionine = N(7)-methylguanosine(46) in tRNA + S-adenosyl-L-homocysteine. Its pathway is tRNA modification; N(7)-methylguanine-tRNA biosynthesis. Functionally, catalyzes the formation of N(7)-methylguanine at position 46 (m7G46) in tRNA. This chain is tRNA (guanine-N(7)-)-methyltransferase, found in Yersinia enterocolitica serotype O:8 / biotype 1B (strain NCTC 13174 / 8081).